The chain runs to 162 residues: Phosphopantetheine adenylyltransferase (162 aa).

Substrate is bound at residue Ser11. Residues 11 to 12 (SF) and His19 contribute to the ATP site. The substrate site is built by Lys43, Val76, and Arg90. Residues 91 to 93 (GLR), Glu101, and 126 to 132 (HLYISSS) each bind ATP.

The protein belongs to the bacterial CoaD family. In terms of assembly, homohexamer. Mg(2+) is required as a cofactor.

It is found in the cytoplasm. It carries out the reaction (R)-4'-phosphopantetheine + ATP + H(+) = 3'-dephospho-CoA + diphosphate. It participates in cofactor biosynthesis; coenzyme A biosynthesis; CoA from (R)-pantothenate: step 4/5. Functionally, reversibly transfers an adenylyl group from ATP to 4'-phosphopantetheine, yielding dephospho-CoA (dPCoA) and pyrophosphate. The chain is Phosphopantetheine adenylyltransferase from Streptococcus pneumoniae (strain CGSP14).